Here is a 154-residue protein sequence, read N- to C-terminus: MKTFSAKPAEVTKKWVLIDAKGLVVGRLATIVAMRLRGKHLPTYTPHVDCGDNVIIINAQHAVLTGRKREQKTYYKHTGYVGHVKERTARQILEGKHPERVLEKAVERMIPRGPLGRVQMGNLRVYGGADHPHEAQQPEKIDIAKLNRKNTRAA.

This sequence belongs to the universal ribosomal protein uL13 family. As to quaternary structure, part of the 50S ribosomal subunit.

Its function is as follows. This protein is one of the early assembly proteins of the 50S ribosomal subunit, although it is not seen to bind rRNA by itself. It is important during the early stages of 50S assembly. In Bradyrhizobium diazoefficiens (strain JCM 10833 / BCRC 13528 / IAM 13628 / NBRC 14792 / USDA 110), this protein is Large ribosomal subunit protein uL13.